The primary structure comprises 1023 residues: NRPS-like oxidoreductase fscA (1023 aa).

Residues 54–454 (TYGDLNGMAT…NHPFVRQCMV (401 aa)) form an adenylation region. Positions 554-637 (PEDDVIGRQI…SIANHVRSAQ (84 aa)) constitute a Carrier domain. Ser-596 bears the O-(pantetheine 4'-phosphoryl)serine mark. Residues 685 to 901 (LTGGAGYLGQ…VYDESTTRAR (217 aa)) form the Thioester reductase (TE) domain.

It belongs to the NRP synthetase family. Pantetheine 4'-phosphate serves as cofactor.

It functions in the pathway secondary metabolite biosynthesis. In terms of biological role, NRPS-like oxidoreductasee; part of the fragmented gene cluster that mediates the biosynthesis of fusarochromene, a tryptophan-derived metabolite closely related to a group of mycotoxins including fusarochromanone. Within the pathway, fscA acts as an oxidoreductase that reduces the carboxyl group of 4-hydroxykyrunenine to primary alcohol. The first step of the pathway is the epimerization of L-tryptophan to D-tryptophan in the presence of the NRPS-like tryptophan epimerase fscC. D-tryptophan is subsequently hydroxylated by the tryptophan 6-hydroxylase fscE to yield 6-hydroxytryptophan. The pyrrole ring undergoes cleavaged by the tryptophan 2,3-dioxygenase fscD and is finally converted to 4-hydroxykyrunenine by the hydrolase fscH. The NRPS-like oxidoreductase fscA reduces the carboxyl group to primary alcohol and the DMATS-type prenyltransferase fscG performs prenylation, followed by the formation of a chromene ring catalyzed by the oxidoreductase fscI, which leads to desacetylfusarochromene. Epoxidation by fscF and rearrangement reactions of chromene double bonds convert compound desacetylfusarochromene to fusarochromanones. Although specific acetyltransferases were not found near the fsc gene cluster, several predicted enzymes containing the N-acetyltransferase superfamily domain are present in the genome of F.equiseti. These predicted enzymes may have the potential to convert desacetylfusarochromene to fusarochromene. This is NRPS-like oxidoreductase fscA from Fusarium equiseti (Fusarium scirpi).